A 202-amino-acid chain; its full sequence is N-(5'-phosphoribosyl)anthranilate isomerase (202 aa).

The protein belongs to the TrpF family.

The enzyme catalyses N-(5-phospho-beta-D-ribosyl)anthranilate = 1-(2-carboxyphenylamino)-1-deoxy-D-ribulose 5-phosphate. It participates in amino-acid biosynthesis; L-tryptophan biosynthesis; L-tryptophan from chorismate: step 3/5. This is N-(5'-phosphoribosyl)anthranilate isomerase from Listeria monocytogenes serotype 4b (strain F2365).